Here is a 140-residue protein sequence, read N- to C-terminus: Pre-mRNA-splicing factor NTC20 (140 aa).

Serine 139 bears the Phosphoserine mark.

In terms of assembly, belongs to the NTC complex (or PRP19-associated complex), composed of at least CEF1, CLF1, ISY1, NTC20, SNT309, SYF1, SYF2, and PRP19. The NTC complex associates with the spliceosome after the release of the U1 and U4 snRNAs and forms the CWC spliceosome subcomplex (or CEF1-associated complex) reminiscent of a late-stage spliceosome composed also of the U2, U5 and U6 snRNAs and at least BUD13, BRR2, CDC40, CUS1, CWC2, CWC15, CWC21, CWC22, CWC23, CWC24, CWC25, CWC27, ECM2, HSH155, IST3, LEA1, MSL1, PRP8, PRP9, PRP11, PRP21, PRP22, PRP45, PRP46, SLU7, SMB1, SMD1, SMD2, SMD3, SMX2, SMX3, SNU114, SPP2, RSE1 and YJU2. Interacts with CEF1, CLF1, ISY1, PRP46, and SYF1.

The protein resides in the nucleus. In terms of biological role, involved in pre-mRNA splicing. As a component of the NTC complex, associates to the spliceosome to mediate conformational rearrangement or to stabilize the structure of the spliceosome after U4 snRNA dissociation, which leads to spliceosome maturation. The sequence is that of Pre-mRNA-splicing factor NTC20 (NTC20) from Saccharomyces cerevisiae (strain ATCC 204508 / S288c) (Baker's yeast).